Consider the following 274-residue polypeptide: Probable ribosomal RNA small subunit methyltransferase A (274 aa).

6 residues coordinate S-adenosyl-L-methionine: His22, Leu24, Gly50, Glu71, Asp99, and Asn114.

Belongs to the class I-like SAM-binding methyltransferase superfamily. rRNA adenine N(6)-methyltransferase family. RsmA subfamily.

It is found in the cytoplasm. Its function is as follows. Specifically dimethylates two adjacent adenosines in the loop of a conserved hairpin near the 3'-end of 16S rRNA in the 30S particle. May play a critical role in biogenesis of 30S subunits. The chain is Probable ribosomal RNA small subunit methyltransferase A from Natronomonas pharaonis (strain ATCC 35678 / DSM 2160 / CIP 103997 / JCM 8858 / NBRC 14720 / NCIMB 2260 / Gabara) (Halobacterium pharaonis).